Reading from the N-terminus, the 132-residue chain is D-ribose pyranase (132 aa).

The Proton donor role is filled by H20. Substrate-binding positions include D28, H99, and 121–123 (YSN).

It belongs to the RbsD / FucU family. RbsD subfamily. Homodecamer.

The protein localises to the cytoplasm. The catalysed reaction is beta-D-ribopyranose = beta-D-ribofuranose. It participates in carbohydrate metabolism; D-ribose degradation; D-ribose 5-phosphate from beta-D-ribopyranose: step 1/2. Catalyzes the interconversion of beta-pyran and beta-furan forms of D-ribose. This Streptococcus agalactiae serotype V (strain ATCC BAA-611 / 2603 V/R) protein is D-ribose pyranase.